Here is a 640-residue protein sequence, read N- to C-terminus: Threonine--tRNA ligase (640 aa).

The 61-residue stretch at 1–61 folds into the TGS domain; that stretch reads MPIITLPNGD…TEDSTLQIIT (61 aa). Residues 242-533 are catalytic; it reads DHRKIGKALD…LIEHYAGFMP (292 aa). The Zn(2+) site is built by C333, H384, and H510.

The protein belongs to the class-II aminoacyl-tRNA synthetase family. Homodimer. Requires Zn(2+) as cofactor.

The protein resides in the cytoplasm. The enzyme catalyses tRNA(Thr) + L-threonine + ATP = L-threonyl-tRNA(Thr) + AMP + diphosphate + H(+). Catalyzes the attachment of threonine to tRNA(Thr) in a two-step reaction: L-threonine is first activated by ATP to form Thr-AMP and then transferred to the acceptor end of tRNA(Thr). Also edits incorrectly charged L-seryl-tRNA(Thr). This Acinetobacter baumannii (strain AB307-0294) protein is Threonine--tRNA ligase.